The primary structure comprises 510 residues: Ectonucleoside triphosphate diphosphohydrolase 1 (510 aa).

Topologically, residues 1 to 16 (MEDRRESELKTFCSKN) are cytoplasmic. Residues 17–37 (ILVILGFSSIIAVIALLALGL) traverse the membrane as a helical segment. The Extracellular portion of the chain corresponds to 38 to 477 (TQNKPLPENV…SSTRLSHSTY (440 aa)). A glycan (N-linked (GlcNAc...) asparagine) is linked at asparagine 73. A disulfide bridge connects residues cysteine 84 and cysteine 108. Glutamate 174 acts as the Proton acceptor in catalysis. Asparagine 245, asparagine 274, asparagine 291, and asparagine 333 each carry an N-linked (GlcNAc...) asparagine glycan. Cystine bridges form between cysteine 255-cysteine 300 and cysteine 281-cysteine 324. The cysteines at positions 337 and 342 are disulfide-linked. Asparagine 370 carries N-linked (GlcNAc...) asparagine glycosylation. Cysteine 390 and cysteine 413 are disulfide-bonded. A glycan (N-linked (GlcNAc...) asparagine) is linked at asparagine 457. A helical membrane pass occupies residues 478–498 (VFLMVLFSLILVIVVIIGLFV). Residues 499 to 510 (CHRPSYFWKDMV) lie on the Cytoplasmic side of the membrane.

Belongs to the GDA1/CD39 NTPase family. As to quaternary structure, homodimer; disulfide-linked. The cofactor is Ca(2+). It depends on Mg(2+) as a cofactor. Post-translationally, N-glycosylated. Cleaved into two polypeptides that seem to stay together by non-covalent interactions. In terms of processing, the N-terminus is blocked. Post-translationally, palmitoylated on Cys-13; which is required for caveola targeting. In terms of tissue distribution, highest expression found in vascular endothelium, smooth muscle, spleen and lung (at protein level). High expression also found in stomach, duodenum, kidney, lymph node and aorta (at protein level).

It localises to the membrane. The protein resides in the caveola. The catalysed reaction is a ribonucleoside 5'-triphosphate + 2 H2O = a ribonucleoside 5'-phosphate + 2 phosphate + 2 H(+). It carries out the reaction a ribonucleoside 5'-triphosphate + H2O = a ribonucleoside 5'-diphosphate + phosphate + H(+). It catalyses the reaction a ribonucleoside 5'-diphosphate + H2O = a ribonucleoside 5'-phosphate + phosphate + H(+). The enzyme catalyses ATP + 2 H2O = AMP + 2 phosphate + 2 H(+). The catalysed reaction is ATP + H2O = ADP + phosphate + H(+). It carries out the reaction ADP + H2O = AMP + phosphate + H(+). It catalyses the reaction CTP + 2 H2O = CMP + 2 phosphate + 2 H(+). The enzyme catalyses CTP + H2O = CDP + phosphate + H(+). The catalysed reaction is CDP + H2O = CMP + phosphate + H(+). It carries out the reaction GTP + 2 H2O = GMP + 2 phosphate + 2 H(+). It catalyses the reaction GTP + H2O = GDP + phosphate + H(+). The enzyme catalyses GDP + H2O = GMP + phosphate + H(+). The catalysed reaction is ITP + 2 H2O = IMP + 2 phosphate + 2 H(+). It carries out the reaction ITP + H2O = IDP + phosphate + H(+). It catalyses the reaction IDP + H2O = IMP + phosphate + H(+). The enzyme catalyses UTP + 2 H2O = UMP + 2 phosphate + 2 H(+). The catalysed reaction is UTP + H2O = UDP + phosphate + H(+). It carries out the reaction UDP + H2O = UMP + phosphate + H(+). The ATP diphosphohydrolase activity is decreased by half by sodium azide. In terms of biological role, catalyzes the hydrolysis of both di- and triphosphate nucleotides (NDPs and NTPs) and hydrolyze NTPs to nucleotide monophosphates (NMPs) in two distinct successive phosphate-releasing steps, with NDPs as intermediates and participates in the regulation of extracellular levels of nucleotides. By hydrolyzing proinflammatory ATP and platelet-activating ADP to AMP, it blocks platelet aggregation and supports blood flow. The sequence is that of Ectonucleoside triphosphate diphosphohydrolase 1 from Sus scrofa (Pig).